Reading from the N-terminus, the 92-residue chain is Large ribosomal subunit protein eL43 (92 aa).

Residues 39 to 60 (CDFCGKYGMKRQAVGIWCCKGC) form a C4-type zinc finger.

Belongs to the eukaryotic ribosomal protein eL43 family.

This chain is Large ribosomal subunit protein eL43 (RPL37a), found in Ostreococcus tauri.